The chain runs to 370 residues: Anhydro-N-acetylmuramic acid kinase (370 aa).

An ATP-binding site is contributed by 12–19; the sequence is GTSLDGVD.

It belongs to the anhydro-N-acetylmuramic acid kinase family.

The catalysed reaction is 1,6-anhydro-N-acetyl-beta-muramate + ATP + H2O = N-acetyl-D-muramate 6-phosphate + ADP + H(+). Its pathway is amino-sugar metabolism; 1,6-anhydro-N-acetylmuramate degradation. It functions in the pathway cell wall biogenesis; peptidoglycan recycling. Functionally, catalyzes the specific phosphorylation of 1,6-anhydro-N-acetylmuramic acid (anhMurNAc) with the simultaneous cleavage of the 1,6-anhydro ring, generating MurNAc-6-P. Is required for the utilization of anhMurNAc either imported from the medium or derived from its own cell wall murein, and thus plays a role in cell wall recycling. The chain is Anhydro-N-acetylmuramic acid kinase from Pectobacterium carotovorum subsp. carotovorum (strain PC1).